The following is a 299-amino-acid chain: Protein tantalus (299 aa).

The disordered stretch occupies residues 16–100; sequence KDNRSPTTNS…RSSTFGARAG (85 aa). A compositionally biased stretch (polar residues) spans 20 to 35; sequence SPTTNSNLSWQLNQMA. The segment covering 53 to 69 has biased composition (acidic residues); the sequence is ESDDNVSSESHDSDDVD. Over residues 84-93 the composition is skewed to low complexity; sequence CISGSSRRSS. Phosphoserine occurs at positions 204 and 264.

In terms of assembly, binds to DNA in vitro. Interacts directly with Asx. In terms of tissue distribution, ubiquitously expressed in precellularized embryos. Then it decreases at cellular blastoderm to increase again during germ band extension. During germ band extension, it is highly expressed in somatic and visceral mesoderm. Ubiquitously expressed in imaginal disks. In ovary, it is expressed from stage 10.

Its subcellular location is the nucleus. It localises to the cytoplasm. The protein localises to the chromosome. Its function is as follows. Potential cofactor involved in sensory organ development. Despite its interaction with the Polycomb group protein Asx, it does not regulate the expression of homeotic genes. This chain is Protein tantalus, found in Drosophila melanogaster (Fruit fly).